A 269-amino-acid chain; its full sequence is Sulfur carrier protein FdhD (269 aa).

Cys111 serves as the catalytic Cysteine persulfide intermediate.

The protein belongs to the FdhD family.

It is found in the cytoplasm. Functionally, required for formate dehydrogenase (FDH) activity. Acts as a sulfur carrier protein that transfers sulfur from IscS to the molybdenum cofactor prior to its insertion into FDH. The chain is Sulfur carrier protein FdhD from Brucella melitensis biotype 1 (strain ATCC 23456 / CCUG 17765 / NCTC 10094 / 16M).